Here is a 185-residue protein sequence, read N- to C-terminus: Ribosome-recycling factor (185 aa).

It belongs to the RRF family.

Its subcellular location is the cytoplasm. Responsible for the release of ribosomes from messenger RNA at the termination of protein biosynthesis. May increase the efficiency of translation by recycling ribosomes from one round of translation to another. This is Ribosome-recycling factor from Alcanivorax borkumensis (strain ATCC 700651 / DSM 11573 / NCIMB 13689 / SK2).